Here is a 305-residue protein sequence, read N- to C-terminus: 4-diphosphocytidyl-2-C-methyl-D-erythritol kinase (305 aa).

Residue lysine 15 is part of the active site. 99-109 (PMGGGIGGGSS) provides a ligand contact to ATP. Aspartate 141 is a catalytic residue.

This sequence belongs to the GHMP kinase family. IspE subfamily.

The enzyme catalyses 4-CDP-2-C-methyl-D-erythritol + ATP = 4-CDP-2-C-methyl-D-erythritol 2-phosphate + ADP + H(+). It participates in isoprenoid biosynthesis; isopentenyl diphosphate biosynthesis via DXP pathway; isopentenyl diphosphate from 1-deoxy-D-xylulose 5-phosphate: step 3/6. Its function is as follows. Catalyzes the phosphorylation of the position 2 hydroxy group of 4-diphosphocytidyl-2C-methyl-D-erythritol. The polypeptide is 4-diphosphocytidyl-2-C-methyl-D-erythritol kinase (Marinomonas sp. (strain MWYL1)).